The following is an 84-amino-acid chain: Large ribosomal subunit protein uL29 (84 aa).

Belongs to the universal ribosomal protein uL29 family.

This chain is Large ribosomal subunit protein uL29, found in Mycoplasma mobile (strain ATCC 43663 / 163K / NCTC 11711) (Mesomycoplasma mobile).